Consider the following 389-residue polypeptide: tRNA(Met) cytidine acetate ligase (389 aa).

ATP-binding positions include 8-21, G97, N153, and R176; that span reads IAEF…HEYL.

This sequence belongs to the TmcAL family.

The protein resides in the cytoplasm. It catalyses the reaction cytidine(34) in elongator tRNA(Met) + acetate + ATP = N(4)-acetylcytidine(34) in elongator tRNA(Met) + AMP + diphosphate. In terms of biological role, catalyzes the formation of N(4)-acetylcytidine (ac(4)C) at the wobble position of elongator tRNA(Met), using acetate and ATP as substrates. First activates an acetate ion to form acetyladenylate (Ac-AMP) and then transfers the acetyl group to tRNA to form ac(4)C34. This is tRNA(Met) cytidine acetate ligase from Lactococcus lactis subsp. lactis (strain IL1403) (Streptococcus lactis).